The chain runs to 487 residues: Neuronal immunoglobulin domain-containing protein rig-3 (487 aa).

Residues 1 to 23 form the signal peptide; it reads MGRLLAKMLFPLAMCLFVSAVSA. 2 consecutive Ig-like domains span residues 34–139 and 247–354; these read PIVI…KTIK and PEFE…PKVT. Cystine bridges form between C61-C124 and C271-C327. D466 carries the GPI-anchor amidated aspartate lipid modification. Residues 467–487 constitute a propeptide, removed in mature form; it reads SASDSKFPLALATLFFVCLFI.

Expressed in the cholinergic motor neurons AS, VA and DA in the ventral nerve cord and in the mechanosensory ALM neurons in the midbody.

Its subcellular location is the cell projection. It localises to the axon. The protein localises to the synapse. The protein resides in the cell membrane. Functionally, cell surface protein which plays a role in the plasticity of cholinergic synapses at neuromuscular junctions and in the polarity of the mechanosensory neuron ALM, possibly by antagonizing Wnt signaling. The sequence is that of Neuronal immunoglobulin domain-containing protein rig-3 from Caenorhabditis elegans.